A 264-amino-acid polypeptide reads, in one-letter code: Hemin import ATP-binding protein HmuV (264 aa).

Positions 10–246 (LQAQNLSYSI…HTLRKWYQAD (237 aa)) constitute an ABC transporter domain. 42–49 (GPNGAGKS) is an ATP binding site.

The protein belongs to the ABC transporter superfamily. Heme (hemin) importer (TC 3.A.1.14.5) family. As to quaternary structure, the complex is composed of two ATP-binding proteins (HmuV), two transmembrane proteins (HmuU) and a solute-binding protein (HmuT).

The protein localises to the cell inner membrane. Functionally, part of the ABC transporter complex HmuTUV involved in hemin import. Responsible for energy coupling to the transport system. The sequence is that of Hemin import ATP-binding protein HmuV from Photorhabdus laumondii subsp. laumondii (strain DSM 15139 / CIP 105565 / TT01) (Photorhabdus luminescens subsp. laumondii).